A 105-amino-acid chain; its full sequence is Transcriptional regulator SutA (105 aa).

Residues 1–37 (MSEEELEQDELDGADEDDGEELAAADDGEADSSDGDE) are compositionally biased toward acidic residues. Residues 1–105 (MSEEELEQDE…PDSKYGSRPI (105 aa)) are disordered. 2 stretches are compositionally biased toward basic and acidic residues: residues 59–83 (AKQK…KVQE) and 92–105 (PPKK…SRPI).

As to quaternary structure, interacts with RNA polymerase.

In terms of biological role, causes widespread changes in gene expression, and plays a direct role in the regulation of genes encoding ribosomal components. Associates with chromosomal DNA through interaction with RNA polymerase. Contributes to biofilm formation and secondary metabolite production. Important during transitions to and from the survival state. The sequence is that of Transcriptional regulator SutA from Pseudomonas aeruginosa (strain UCBPP-PA14).